A 245-amino-acid polypeptide reads, in one-letter code: 8-amino-3,8-dideoxy-manno-octulosonate cytidylyltransferase (245 aa).

Belongs to the KdsB family.

The protein localises to the cytoplasm. The catalysed reaction is 8-amino-3,8-dideoxy-alpha-D-manno-octulosonate + CTP = CMP-8-amino-3,8-dideoxy-alpha-D-manno-oct-2-ulosonate + diphosphate. It participates in bacterial outer membrane biogenesis; lipopolysaccharide biosynthesis. Activates KDO8N (a required 8-carbon sugar) for incorporation into bacterial lipopolysaccharide in the Shewanella genus. In Shewanella loihica (strain ATCC BAA-1088 / PV-4), this protein is 8-amino-3,8-dideoxy-manno-octulosonate cytidylyltransferase.